The following is a 686-amino-acid chain: DNA gyrase subunit B (686 aa).

Residues methionine 1–glycine 27 show a composition bias toward polar residues. The interval methionine 1–alanine 29 is disordered. Positions cysteine 465–proline 579 constitute a Toprim domain. Mg(2+) is bound by residues glutamate 471, aspartate 544, and aspartate 546.

It belongs to the type II topoisomerase GyrB family. In terms of assembly, heterotetramer, composed of two GyrA and two GyrB chains. In the heterotetramer, GyrA contains the active site tyrosine that forms a transient covalent intermediate with DNA, while GyrB binds cofactors and catalyzes ATP hydrolysis. Requires Mg(2+) as cofactor. The cofactor is Mn(2+). Ca(2+) is required as a cofactor.

It is found in the cytoplasm. The enzyme catalyses ATP-dependent breakage, passage and rejoining of double-stranded DNA.. Functionally, a type II topoisomerase that negatively supercoils closed circular double-stranded (ds) DNA in an ATP-dependent manner to modulate DNA topology and maintain chromosomes in an underwound state. Negative supercoiling favors strand separation, and DNA replication, transcription, recombination and repair, all of which involve strand separation. Also able to catalyze the interconversion of other topological isomers of dsDNA rings, including catenanes and knotted rings. Type II topoisomerases break and join 2 DNA strands simultaneously in an ATP-dependent manner. The chain is DNA gyrase subunit B from Streptomyces coelicolor (strain ATCC BAA-471 / A3(2) / M145).